The primary structure comprises 165 residues: Large ribosomal subunit protein uL10 (165 aa).

It belongs to the universal ribosomal protein uL10 family. As to quaternary structure, part of the ribosomal stalk of the 50S ribosomal subunit. The N-terminus interacts with L11 and the large rRNA to form the base of the stalk. The C-terminus forms an elongated spine to which L12 dimers bind in a sequential fashion forming a multimeric L10(L12)X complex.

Its function is as follows. Forms part of the ribosomal stalk, playing a central role in the interaction of the ribosome with GTP-bound translation factors. The polypeptide is Large ribosomal subunit protein uL10 (Salmonella agona (strain SL483)).